The sequence spans 174 residues: Endoribonuclease YbeY (174 aa).

Zn(2+) contacts are provided by histidine 124, histidine 128, and histidine 134.

It belongs to the endoribonuclease YbeY family. The cofactor is Zn(2+).

Its subcellular location is the cytoplasm. Functionally, single strand-specific metallo-endoribonuclease involved in late-stage 70S ribosome quality control and in maturation of the 3' terminus of the 16S rRNA. This is Endoribonuclease YbeY from Synechococcus elongatus (strain ATCC 33912 / PCC 7942 / FACHB-805) (Anacystis nidulans R2).